A 116-amino-acid chain; its full sequence is Small ribosomal subunit protein bS18c (116 aa).

Over residues 1 to 13 (MKPSFRNTSPSFR) the composition is skewed to polar residues. The tract at residues 1–51 (MKPSFRNTSPSFRNRSKPYFRNRSKPYFRNRSKPSFRNTSKRFSPNQQSFR) is disordered. Residues 14–34 (NRSKPYFRNRSKPYFRNRSKP) show a composition bias toward basic residues. Polar residues predominate over residues 35-49 (SFRNTSKRFSPNQQS).

The protein belongs to the bacterial ribosomal protein bS18 family. Part of the 30S ribosomal subunit.

The protein resides in the plastid. It is found in the chloroplast. In Cryptomeria japonica (Japanese cedar), this protein is Small ribosomal subunit protein bS18c.